A 419-amino-acid chain; its full sequence is Putative zinc metalloprotease spr0242 (419 aa).

Residue His18 coordinates Zn(2+). Glu19 is a catalytic residue. Zn(2+) is bound at residue His22. 3 helical membrane passes run 169-191 (LITN…WVLI), 345-367 (ILYF…IPAL), and 388-410 (EIET…AVTW).

This sequence belongs to the peptidase M50B family. The cofactor is Zn(2+).

It is found in the cell membrane. This chain is Putative zinc metalloprotease spr0242, found in Streptococcus pneumoniae (strain ATCC BAA-255 / R6).